The sequence spans 369 residues: MSLTPLGQRLAEVAASPEEPWEILAENVPVWPEPPRLQAVGSWDLDAQYAPSQGTEELLEALRLRQREQGIDVGAESLLVTNGAFDGLGLIARHLTGKGVRRAVCAGPVLLSVADLLRDLGLDVQVPDWPELVGGRSWSALGPGDLLYLNSPHNPTGACLDEATARDLFAAQRRLGFALVLDLVYDAFVHDPAALAAPPALVEDWRGVYGLNSFSKNYGAPGLRVGWITADPQEVDRLTARMEWERIAVSTRAQSQAAQLCKLGNQPLTERVRAGHRLVLDWARANGMRVSPPQGGTHVWVEAGVPDTEALADALMAEHRLVVTTSAHYHPASSRHIRVPTGVEPAFLTRSLEAVSAVSERLRRSATVG.

Lys216 is subject to N6-(pyridoxal phosphate)lysine.

The protein belongs to the class-I pyridoxal-phosphate-dependent aminotransferase family. The cofactor is pyridoxal 5'-phosphate.

The enzyme catalyses L-arginine + 2-oxoglutarate = 5-guanidino-2-oxopentanoate + L-glutamate. It carries out the reaction (3R)-5-guanidino-3-methyl-2-oxopentanoate + L-aspartate = (3R)-3-methyl-L-arginine + oxaloacetate. Its pathway is antibiotic biosynthesis. Its function is as follows. Aminotransferase involved in the formation of the rare amino acid 3-methylarginine (MeArg), which is incorporated into the peptidyl nucleoside antibiotic arginomycin. Catalyzes two rounds of transamination: the transfer of the amino group from L-arginine to 2-oxoglutarate to give glutamate and 5-guanidino-2-oxopentanoic acid, which will be methylated by ArgN. Then, ArgM specifically catalyzes transamination from the donor L-aspartate to the 5-guanidino-3-methyl-2-oxopentanoic acid produced by ArgN, generating the final product, 3-methylarginine. Cannot use arginine analogs, such as D-arginine, L-homoarginine and N-methylarginine for the first transamination. In Streptomyces arginensis, this protein is 3-methylarginine biosynthesis aminotransferase ArgM.